Consider the following 346-residue polypeptide: Histidinol-phosphate aminotransferase (346 aa).

Lysine 209 carries the post-translational modification N6-(pyridoxal phosphate)lysine.

It belongs to the class-II pyridoxal-phosphate-dependent aminotransferase family. Histidinol-phosphate aminotransferase subfamily. As to quaternary structure, homodimer. Pyridoxal 5'-phosphate serves as cofactor.

It catalyses the reaction L-histidinol phosphate + 2-oxoglutarate = 3-(imidazol-4-yl)-2-oxopropyl phosphate + L-glutamate. The protein operates within amino-acid biosynthesis; L-histidine biosynthesis; L-histidine from 5-phospho-alpha-D-ribose 1-diphosphate: step 7/9. The sequence is that of Histidinol-phosphate aminotransferase from Aliivibrio fischeri (strain MJ11) (Vibrio fischeri).